Here is a 293-residue protein sequence, read N- to C-terminus: MSIRTPMKLGIPKGSLEEATINLLARSGWKIRKHHRNYFPEINDPELTARLCRVQEIPRYIEDGILDVGLTGKDWLLETGSDVVVVSDLVYSKVSNRPARWVLAVAGDSPYTRPEDLAGKRVATELLGVTKRYFADAGIEVNVQYSWGATEAKVVEGLADAIVEVTETGTTIKAHGLRIISEVLLTNTVLIANRAAWEDPCRRRKIEQIDLLLQGALRADSLVGLKMNVPTRCLDAVLDQLPSLNSPTVAGLRDNTWFAVEIVVDNGVVRDLIPRLREAGAEGIIEYALNKVI.

This sequence belongs to the ATP phosphoribosyltransferase family. Long subfamily. Mg(2+) is required as a cofactor.

The protein localises to the cytoplasm. It carries out the reaction 1-(5-phospho-beta-D-ribosyl)-ATP + diphosphate = 5-phospho-alpha-D-ribose 1-diphosphate + ATP. Its pathway is amino-acid biosynthesis; L-histidine biosynthesis; L-histidine from 5-phospho-alpha-D-ribose 1-diphosphate: step 1/9. Its activity is regulated as follows. Feedback inhibited by histidine. Catalyzes the condensation of ATP and 5-phosphoribose 1-diphosphate to form N'-(5'-phosphoribosyl)-ATP (PR-ATP). Has a crucial role in the pathway because the rate of histidine biosynthesis seems to be controlled primarily by regulation of HisG enzymatic activity. The protein is ATP phosphoribosyltransferase of Nitratidesulfovibrio vulgaris (strain DP4) (Desulfovibrio vulgaris).